We begin with the raw amino-acid sequence, 228 residues long: Phosphoglycolate phosphatase (228 aa).

Catalysis depends on Asp12, which acts as the Nucleophile. Mg(2+) is bound by residues Asp12, Asp14, and Asp177.

This sequence belongs to the HAD-like hydrolase superfamily. CbbY/CbbZ/Gph/YieH family. Mg(2+) is required as a cofactor.

The enzyme catalyses 2-phosphoglycolate + H2O = glycolate + phosphate. The protein operates within organic acid metabolism; glycolate biosynthesis; glycolate from 2-phosphoglycolate: step 1/1. Functionally, specifically catalyzes the dephosphorylation of 2-phosphoglycolate. Is involved in the dissimilation of the intracellular 2-phosphoglycolate formed during the DNA repair of 3'-phosphoglycolate ends, a major class of DNA lesions induced by oxidative stress. This is Phosphoglycolate phosphatase from Vibrio vulnificus (strain YJ016).